Here is a 579-residue protein sequence, read N- to C-terminus: Threonylcarbamoyladenosine tRNA methylthiotransferase (579 aa).

Ser-53 bears the Phosphoserine mark. Residues Gln-64–Lys-172 form the MTTase N-terminal domain. 2 residues coordinate [4Fe-4S] cluster: Cys-73 and Cys-109. The residue at position 122 (Ser-122) is a Phosphoserine. [4Fe-4S] cluster-binding residues include Cys-138, Cys-214, Cys-218, and Cys-221. Residues Arg-200–Asp-431 enclose the Radical SAM core domain. A TRAM domain is found at Asp-431 to Ser-493. Residue Thr-499 is modified to Phosphothreonine. Residues Cys-556–Tyr-578 traverse the membrane as a helical segment.

Belongs to the methylthiotransferase family. CDKAL1 subfamily. It depends on [4Fe-4S] cluster as a cofactor. In terms of tissue distribution, expressed in pancreatic islets.

It is found in the endoplasmic reticulum membrane. The catalysed reaction is N(6)-L-threonylcarbamoyladenosine(37) in tRNA + (sulfur carrier)-SH + AH2 + 2 S-adenosyl-L-methionine = 2-methylsulfanyl-N(6)-L-threonylcarbamoyladenosine(37) in tRNA + (sulfur carrier)-H + 5'-deoxyadenosine + L-methionine + A + S-adenosyl-L-homocysteine + 2 H(+). In terms of biological role, catalyzes the methylthiolation of N6-threonylcarbamoyladenosine (t(6)A), leading to the formation of 2-methylthio-N6-threonylcarbamoyladenosine (ms(2)t(6)A) at position 37 in tRNAs that read codons beginning with adenine. This is Threonylcarbamoyladenosine tRNA methylthiotransferase (CDKAL1) from Homo sapiens (Human).